We begin with the raw amino-acid sequence, 607 residues long: LRR receptor kinase SERK2 (607 aa).

A signal peptide spans 1–21 (MRELRVAVLIIAVSLPSFSAS). Residues 22-219 (DRQGDALYDM…QSGSHSSKIG (198 aa)) are Extracellular-facing. N-linked (GlcNAc...) asparagine glycans are attached at residues asparagine 36 and asparagine 110. 4 LRR repeats span residues 87–110 (LKYL…QFGN), 111–135 (LSSL…LGQL), 136–159 (SKLQ…LAKI), and 160–183 (SSLT…LFQV). 4 N-linked (GlcNAc...) asparagine glycosylation sites follow: asparagine 149, asparagine 171, asparagine 187, and asparagine 206. Residues 220–240 (IVLGTVGGVIGLLIVAALFLF) traverse the membrane as a helical segment. Over 241–607 (CKGRRKSHLR…QEAIELSGGR (367 aa)) the chain is Cytoplasmic. Positions 284–563 (FSERNVLGQG…VVRMLEGEGL (280 aa)) constitute a Protein kinase domain. ATP is bound by residues 290–298 (LGQGGFGKV) and lysine 312. Aspartate 411 (proton acceptor) is an active-site residue.

Belongs to the protein kinase superfamily. Ser/Thr protein kinase family.

The protein resides in the cell membrane. It carries out the reaction L-seryl-[protein] + ATP = O-phospho-L-seryl-[protein] + ADP + H(+). The catalysed reaction is L-threonyl-[protein] + ATP = O-phospho-L-threonyl-[protein] + ADP + H(+). Its function is as follows. May be involved in the regulation of plant growth through the brassinosteroid (BR) signaling pathway. In Oryza sativa subsp. japonica (Rice), this protein is LRR receptor kinase SERK2.